A 123-amino-acid chain; its full sequence is SOSS complex subunit C homolog (123 aa).

This sequence belongs to the SOSS-C family.

The polypeptide is SOSS complex subunit C homolog (Drosophila ananassae (Fruit fly)).